The chain runs to 73 residues: Putative antimicrobial peptide clone 5 (73 aa).

Residues 1 to 22 form the signal peptide; it reads MQIKHLITLFFLVLIGADQCSA. Positions 45–73 are excised as a propeptide; sequence EVSPQIDQYRNFQKREAELEELLDRLPMY.

Belongs to the non-disulfide-bridged peptide (NDBP) superfamily. Short antimicrobial peptide (group 4) family. In terms of tissue distribution, expressed by the venom gland.

It localises to the secreted. Its function is as follows. Antibacterial peptide. This Tityus costatus (Brazilian scorpion) protein is Putative antimicrobial peptide clone 5.